The sequence spans 513 residues: Cytochrome P450 94A2 (513 aa).

A helical transmembrane segment spans residues 7-24; sequence ISWLLFSTSLFWFLFLAT. Residue C455 participates in heme binding.

This sequence belongs to the cytochrome P450 family. Heme is required as a cofactor. Weakly expressed in seedlings.

Its subcellular location is the endoplasmic reticulum membrane. In terms of biological role, catalyzes the omega-hydroxylation of various fatty acids (FA). The substrate specificity is higher for myristate &gt; laurate = palmitate (C14&gt;C16=C12). The protein is Cytochrome P450 94A2 (CYP94A2) of Vicia sativa (Spring vetch).